Reading from the N-terminus, the 100-residue chain is MELTPREKDKLLLFTAALVAERRKARGLKLNYPEAVALISAAVLEWARDGRTVAELMHLGTTVLTRADVMEGIPEMIPDIQVEATFPDGTKLVTVHHPIV.

The protein belongs to the urease gamma subunit family. As to quaternary structure, heterotrimer of UreA (gamma), UreB (beta) and UreC (alpha) subunits. Three heterotrimers associate to form the active enzyme.

The protein localises to the cytoplasm. It catalyses the reaction urea + 2 H2O + H(+) = hydrogencarbonate + 2 NH4(+). It participates in nitrogen metabolism; urea degradation; CO(2) and NH(3) from urea (urease route): step 1/1. In Delftia acidovorans (strain DSM 14801 / SPH-1), this protein is Urease subunit gamma.